The following is a 324-amino-acid chain: tRNA U34 carboxymethyltransferase (324 aa).

Carboxy-S-adenosyl-L-methionine is bound by residues K91, W105, K110, G130, D152–S154, I181–E182, M196, Y200, and R315.

This sequence belongs to the class I-like SAM-binding methyltransferase superfamily. CmoB family. In terms of assembly, homotetramer.

It catalyses the reaction carboxy-S-adenosyl-L-methionine + 5-hydroxyuridine(34) in tRNA = 5-carboxymethoxyuridine(34) in tRNA + S-adenosyl-L-homocysteine + H(+). In terms of biological role, catalyzes carboxymethyl transfer from carboxy-S-adenosyl-L-methionine (Cx-SAM) to 5-hydroxyuridine (ho5U) to form 5-carboxymethoxyuridine (cmo5U) at position 34 in tRNAs. This chain is tRNA U34 carboxymethyltransferase, found in Aliivibrio salmonicida (strain LFI1238) (Vibrio salmonicida (strain LFI1238)).